The sequence spans 160 residues: Lipoprotein signal peptidase (160 aa).

A run of 3 helical transmembrane segments spans residues 13–33 (IYIT…HLII), 72–92 (WFLS…ITKL), and 104–124 (SLII…GFVV). Active-site residues include D125 and D143. Residues 134–154 (WHFATFNIADCSIFIGIIILM) traverse the membrane as a helical segment.

The protein belongs to the peptidase A8 family.

The protein localises to the cell inner membrane. The enzyme catalyses Release of signal peptides from bacterial membrane prolipoproteins. Hydrolyzes -Xaa-Yaa-Zaa-|-(S,diacylglyceryl)Cys-, in which Xaa is hydrophobic (preferably Leu), and Yaa (Ala or Ser) and Zaa (Gly or Ala) have small, neutral side chains.. The protein operates within protein modification; lipoprotein biosynthesis (signal peptide cleavage). Functionally, this protein specifically catalyzes the removal of signal peptides from prolipoproteins. The chain is Lipoprotein signal peptidase from Buchnera aphidicola subsp. Acyrthosiphon pisum (strain Tuc7).